The chain runs to 489 residues: Rhamnulokinase (489 aa).

An ATP-binding site is contributed by 13 to 17 (ASSGR). Cysteines 68 and 222 form a disulfide. Substrate contacts are provided by residues glycine 83 and 236–238 (HDT). The active-site Proton acceptor is aspartate 237. Threonine 259 contacts ATP. Residue asparagine 296 participates in substrate binding. Residue glutamine 304 participates in ATP binding. Cysteines 353 and 370 form a disulfide. Residue glycine 402 coordinates ATP. A disulfide bond links cysteine 413 and cysteine 417.

Belongs to the rhamnulokinase family. Mg(2+) is required as a cofactor.

The catalysed reaction is L-rhamnulose + ATP = L-rhamnulose 1-phosphate + ADP + H(+). Its pathway is carbohydrate degradation; L-rhamnose degradation; glycerone phosphate from L-rhamnose: step 2/3. In terms of biological role, involved in the catabolism of L-rhamnose (6-deoxy-L-mannose). Catalyzes the transfer of the gamma-phosphate group from ATP to the 1-hydroxyl group of L-rhamnulose to yield L-rhamnulose 1-phosphate. The protein is Rhamnulokinase of Salmonella typhi.